The primary structure comprises 354 residues: Uroporphyrinogen decarboxylase (354 aa).

Residues 27 to 31 (RQAGR), aspartate 77, tyrosine 154, serine 209, and histidine 327 contribute to the substrate site.

Belongs to the uroporphyrinogen decarboxylase family. In terms of assembly, homodimer.

The protein resides in the cytoplasm. The enzyme catalyses uroporphyrinogen III + 4 H(+) = coproporphyrinogen III + 4 CO2. It participates in porphyrin-containing compound metabolism; protoporphyrin-IX biosynthesis; coproporphyrinogen-III from 5-aminolevulinate: step 4/4. Functionally, catalyzes the decarboxylation of four acetate groups of uroporphyrinogen-III to yield coproporphyrinogen-III. This Shewanella halifaxensis (strain HAW-EB4) protein is Uroporphyrinogen decarboxylase.